Here is a 224-residue protein sequence, read N- to C-terminus: Oxalate oxidase GF-3.8 (224 aa).

An N-terminal signal peptide occupies residues 1-23 (MGYSKNIASGMFAMLLLASAVLS). Cys-33 and Cys-49 are oxidised to a cystine. One can recognise a Cupin type-1 domain in the interval 63-214 (SKLAKAGNTS…ALRVEAGVVE (152 aa)). 2 N-linked (GlcNAc...) asparagine glycosylation sites follow: Asn-70 and Asn-75. Positions 111, 113, 118, and 160 each coordinate Mn(2+).

It belongs to the germin family. Oligomer (believed to be a pentamer but probably hexamer).

The protein localises to the secreted. It is found in the extracellular space. Its subcellular location is the apoplast. The protein resides in the cytoplasm. It localises to the cell wall. It catalyses the reaction oxalate + O2 + 2 H(+) = H2O2 + 2 CO2. In terms of biological role, produces developmental and stress-related release of hydrogen peroxide in the apoplast. May play an important role in several aspects of plant growth and defense mechanisms. The protein is Oxalate oxidase GF-3.8 of Triticum aestivum (Wheat).